The following is a 230-amino-acid chain: N-(5'-phosphoribosyl)anthranilate isomerase (230 aa).

Belongs to the TrpF family.

It carries out the reaction N-(5-phospho-beta-D-ribosyl)anthranilate = 1-(2-carboxyphenylamino)-1-deoxy-D-ribulose 5-phosphate. The protein operates within amino-acid biosynthesis; L-tryptophan biosynthesis; L-tryptophan from chorismate: step 3/5. The polypeptide is N-(5'-phosphoribosyl)anthranilate isomerase (Trichodesmium erythraeum (strain IMS101)).